A 443-amino-acid polypeptide reads, in one-letter code: Probable D-serine dehydratase (443 aa).

Lysine 116 carries the N6-(pyridoxal phosphate)lysine modification.

This sequence belongs to the serine/threonine dehydratase family. DsdA subfamily. The cofactor is pyridoxal 5'-phosphate.

It catalyses the reaction D-serine = pyruvate + NH4(+). This is Probable D-serine dehydratase from Bacillus cereus (strain ATCC 14579 / DSM 31 / CCUG 7414 / JCM 2152 / NBRC 15305 / NCIMB 9373 / NCTC 2599 / NRRL B-3711).